We begin with the raw amino-acid sequence, 890 residues long: Translation initiation factor IF-2 (890 aa).

Residues 50–304 (LRQGSPEQEE…LQQEFERPTA (255 aa)) are disordered. Basic and acidic residues-rich tracts occupy residues 112–125 (KRSD…RKQE), 136–147 (RALEQEEAKREE), and 217–262 (ALKE…QEAK). The 170-residue stretch at 390-559 (GRAPVVTVMG…VLQAELQELK (170 aa)) folds into the tr-type G domain. The interval 399 to 406 (GHVDHGKT) is G1. Residue 399 to 406 (GHVDHGKT) participates in GTP binding. A G2 region spans residues 424-428 (GITQH). The tract at residues 445-448 (DTPG) is G3. Residues 445–449 (DTPGH) and 499–502 (NKMD) contribute to the GTP site. Residues 499–502 (NKMD) are G4. The G5 stretch occupies residues 535–537 (SAM).

Belongs to the TRAFAC class translation factor GTPase superfamily. Classic translation factor GTPase family. IF-2 subfamily.

It localises to the cytoplasm. In terms of biological role, one of the essential components for the initiation of protein synthesis. Protects formylmethionyl-tRNA from spontaneous hydrolysis and promotes its binding to the 30S ribosomal subunits. Also involved in the hydrolysis of GTP during the formation of the 70S ribosomal complex. The protein is Translation initiation factor IF-2 of Halorhodospira halophila (strain DSM 244 / SL1) (Ectothiorhodospira halophila (strain DSM 244 / SL1)).